The chain runs to 236 residues: Aquaporin Z (236 aa).

A run of 2 helical transmembrane segments spans residues phenylalanine 12–valine 32 and isoleucine 37–valine 57. The NPA 1 motif lies at asparagine 66–alanine 68. 3 helical membrane-spanning segments follow: residues valine 92–phenylalanine 112, alanine 136–threonine 156, and glycine 163–valine 183. Positions asparagine 189–alanine 191 match the NPA 2 motif. Residues alanine 197 to alanine 217 traverse the membrane as a helical segment.

Belongs to the MIP/aquaporin (TC 1.A.8) family. Homotetramer.

Its subcellular location is the cell inner membrane. The catalysed reaction is H2O(in) = H2O(out). Functionally, channel that permits osmotically driven movement of water in both directions. It is involved in the osmoregulation and in the maintenance of cell turgor during volume expansion in rapidly growing cells. It mediates rapid entry or exit of water in response to abrupt changes in osmolarity. The polypeptide is Aquaporin Z (Bordetella bronchiseptica (strain ATCC BAA-588 / NCTC 13252 / RB50) (Alcaligenes bronchisepticus)).